The chain runs to 284 residues: 2-dehydro-3-deoxyphosphooctonate aldolase (284 aa).

Belongs to the KdsA family.

The protein localises to the cytoplasm. It carries out the reaction D-arabinose 5-phosphate + phosphoenolpyruvate + H2O = 3-deoxy-alpha-D-manno-2-octulosonate-8-phosphate + phosphate. It participates in carbohydrate biosynthesis; 3-deoxy-D-manno-octulosonate biosynthesis; 3-deoxy-D-manno-octulosonate from D-ribulose 5-phosphate: step 2/3. It functions in the pathway bacterial outer membrane biogenesis; lipopolysaccharide biosynthesis. The sequence is that of 2-dehydro-3-deoxyphosphooctonate aldolase from Salmonella arizonae (strain ATCC BAA-731 / CDC346-86 / RSK2980).